The sequence spans 699 residues: Elongation factor G (699 aa).

Residues 8 to 288 enclose the tr-type G domain; that stretch reads EDYRNFGIMA…AVVDYLPSPI (281 aa). Residues 17–24, 86–90, and 140–143 each bind GTP; these read AHIDAGKT, DTPGH, and NKMD.

The protein belongs to the TRAFAC class translation factor GTPase superfamily. Classic translation factor GTPase family. EF-G/EF-2 subfamily.

The protein resides in the cytoplasm. In terms of biological role, catalyzes the GTP-dependent ribosomal translocation step during translation elongation. During this step, the ribosome changes from the pre-translocational (PRE) to the post-translocational (POST) state as the newly formed A-site-bound peptidyl-tRNA and P-site-bound deacylated tRNA move to the P and E sites, respectively. Catalyzes the coordinated movement of the two tRNA molecules, the mRNA and conformational changes in the ribosome. The polypeptide is Elongation factor G (Rhizobium meliloti (strain 1021) (Ensifer meliloti)).